The chain runs to 56 residues: uncharacterized protein (56 aa).

This is an uncharacterized protein from Escherichia coli (strain K12).